A 198-amino-acid chain; its full sequence is 7-methyl-GTP pyrophosphatase (198 aa).

Residue Asp75 is the Proton acceptor of the active site.

This sequence belongs to the Maf family. YceF subfamily. It depends on a divalent metal cation as a cofactor.

It is found in the cytoplasm. It catalyses the reaction N(7)-methyl-GTP + H2O = N(7)-methyl-GMP + diphosphate + H(+). Its function is as follows. Nucleoside triphosphate pyrophosphatase that hydrolyzes 7-methyl-GTP (m(7)GTP). May have a dual role in cell division arrest and in preventing the incorporation of modified nucleotides into cellular nucleic acids. This is 7-methyl-GTP pyrophosphatase from Nitrosospira multiformis (strain ATCC 25196 / NCIMB 11849 / C 71).